The primary structure comprises 955 residues: Histone deacetylase 6 (955 aa).

Histone deacetylase stretches follow at residues 15-337 (TLIG…YAPF) and 425-749 (METL…VLQN). The 1 role is filled by histidine 146. The active-site 2 is the histidine 561. The tract at residues 815–840 (SIDMADQSSSSGSSSSSTRPSHNLEI) is disordered. A compositionally biased stretch (low complexity) spans 818-831 (MADQSSSSGSSSSS). The segment at 853 to 951 (ATCPHLKEVK…SAAHESKFGE (99 aa)) adopts a UBP-type zinc-finger fold. Cysteine 855, histidine 857, cysteine 875, cysteine 878, cysteine 887, cysteine 890, and cysteine 895 together coordinate Zn(2+). Residues 896–898 (GRF) form a ubiquitin binding region. Residues histidine 902, histidine 906, histidine 912, cysteine 925, and cysteine 928 each contribute to the Zn(2+) site. A ubiquitin binding region spans residues 924–931 (WCYPCDSY).

The protein belongs to the histone deacetylase family. HD type 2 subfamily. It depends on Zn(2+) as a cofactor.

The protein localises to the nucleus. The catalysed reaction is N(6)-acetyl-L-lysyl-[histone] + H2O = L-lysyl-[histone] + acetate. Its function is as follows. Probable histone deacetylase. Histone deacetylases are responsible for the deacetylation of lysine residues on the N-terminal part of the core histones (H2A, H2B, H3 and H4). Histone deacetylation gives a tag for epigenetic repression and plays an important role in transcriptional regulation, cell cycle progression and developmental events. Histone deacetylases act via the formation of large multiprotein complexes. The sequence is that of Histone deacetylase 6 (hda-6) from Caenorhabditis elegans.